The chain runs to 526 residues: mRNA export factor ICP27 homolog (526 aa).

4 residues coordinate Zn(2+): Cys239, His344, Cys346, and Cys351. The segment at 239-351 adopts a CHC2-type zinc-finger fold; the sequence is CVFNDNGHGD…NNHQCDDIGC (113 aa).

This sequence belongs to the HHV-1 ICP27 protein family.

Its subcellular location is the virion tegument. The protein localises to the virion. It is found in the host nucleus. It localises to the host cytoplasm. Immediate early (EI) protein that plays many roles during productive infection including regulation of viral gene expression and nuclear export of intronless viral RNAs. The protein is mRNA export factor ICP27 homolog of Human herpesvirus 7 (strain JI) (HHV-7).